The following is a 169-amino-acid chain: Cell division inhibitor SulA (169 aa).

Residues 106-112 form a ftsZ binding region; the sequence is ALRTGNY. Residues 162-169 form a lon protease binding region; it reads KIHSNLYH.

This sequence belongs to the SulA family. As to quaternary structure, interacts with FtsZ. Post-translationally, is rapidly cleaved and degraded by the Lon protease once DNA damage is repaired.

Component of the SOS system and an inhibitor of cell division. Accumulation of SulA causes rapid cessation of cell division and the appearance of long, non-septate filaments. In the presence of GTP, binds a polymerization-competent form of FtsZ in a 1:1 ratio, thus inhibiting FtsZ polymerization and therefore preventing it from participating in the assembly of the Z ring. This mechanism prevents the premature segregation of damaged DNA to daughter cells during cell division. The polypeptide is Cell division inhibitor SulA (Shigella boydii serotype 4 (strain Sb227)).